The chain runs to 100 residues: Virion membrane protein OPG135 (100 aa).

An N-terminal signal peptide occupies residues 1-22 (MSCYTAILKSVGGLALFQVANG). Over 23-45 (AIDLCRHFFMYFCEQKLRPNSFW) the chain is Intravirion. A helical transmembrane segment spans residues 46-66 (FVVVRAIASMIMYLVLGIALL). At 67-83 (YISEQDDKKNTNNDSNS) the chain is on the virion surface side. The disordered stretch occupies residues 75–100 (KNTNNDSNSNNDKRNVSSINSNSSHK). N-linked (GlcNAc...) asparagine; by host glycosylation is found at N79, N89, and N96.

The protein belongs to the chordopoxvirinae A9 family.

It is found in the virion membrane. It localises to the host cytoplasm. Functionally, envelope protein. Required for an early step in virion morphogenesis. The chain is Virion membrane protein OPG135 (OPG135) from Monkeypox virus.